Consider the following 129-residue polypeptide: Virion-associated protein (129 aa).

Coiled-coil stretches lie at residues 1-31 (MANL…ILEM) and 38-59 (IKES…LIND). Residues 122-129 (PAGWPNQF) form a capsid binding region.

It belongs to the caulimovirus ORF III family. In terms of assembly, homotetramer, through coiled-coil domain. Homotrimer when interacts with icosehadral capsid. Interacts with capsid protein, and with Movement protein.

Its subcellular location is the virion. The protein resides in the host cell junction. It localises to the host plasmodesma. In terms of biological role, plays a role in virus cell-to-cell and plant-to-plant transmission. Interacts with virion icosahedral capsid and movement protein, thereby facilitating virion cell-to-cell transmission through plasmodesmata opened by viral movement protein. Also interacts with aphid transmission factor, attaching the virion to aphid stylet when the animal feeds on an virus infected plant. Aphid saliva may later detach the virion, inducing release of infectious particles when the animal feeds on a new plant. This chain is Virion-associated protein, found in Arabidopsis thaliana (Mouse-ear cress).